Consider the following 88-residue polypeptide: NADH-ubiquinone oxidoreductase chain 4L (88 aa).

The next 3 helical transmembrane spans lie at 1 to 21 (MNLS…NRKN), 22 to 42 (IILM…LVLM), and 55 to 75 (FSIY…SILV).

This sequence belongs to the complex I subunit 4L family.

Its subcellular location is the mitochondrion membrane. It carries out the reaction a ubiquinone + NADH + 5 H(+)(in) = a ubiquinol + NAD(+) + 4 H(+)(out). Core subunit of the mitochondrial membrane respiratory chain NADH dehydrogenase (Complex I) that is believed to belong to the minimal assembly required for catalysis. Complex I functions in the transfer of electrons from NADH to the respiratory chain. The immediate electron acceptor for the enzyme is believed to be ubiquinone. The sequence is that of NADH-ubiquinone oxidoreductase chain 4L (ND4L) from Schizophyllum commune (Split gill fungus).